The following is a 484-amino-acid chain: Protein phosphatase 1B (484 aa).

Over residues 1–14 (MGAFLDKPKTEKHN) the composition is skewed to basic and acidic residues. The disordered stretch occupies residues 1–20 (MGAFLDKPKTEKHNAHGAGN). The N-myristoyl glycine moiety is linked to residue G2. K12 participates in a covalent cross-link: Glycyl lysine isopeptide (Lys-Gly) (interchain with G-Cter in ISG15). In terms of domain architecture, PPM-type phosphatase spans 23 to 295 (RYGLSSMQGW…DNMSIVLVCF (273 aa)). Mn(2+)-binding residues include D60 and G61. K142 participates in a covalent cross-link: Glycyl lysine isopeptide (Lys-Gly) (interchain with G-Cter in ISG15). The Mn(2+) site is built by D243 and D286. A Phosphoserine modification is found at S391. The segment at 431–484 (EENPAEQAATAASSNSDAGNTVAMQESHTESKSDLAELDSCTEDAGTKMSGEKL) is disordered. Residues 440-456 (TAASSNSDAGNTVAMQE) show a composition bias toward polar residues.

The protein belongs to the PP2C family. In terms of assembly, monomer. Interacts with PAK6. Interacts with the phosphorylated form of IKBKB/IKKB. It depends on Mg(2+) as a cofactor. The cofactor is Mn(2+). Isgylation negatively regulates its activity. Post-translationally, N-myristoylation is essential for the recognition of its substrates for dephosphorylation.

The protein resides in the cytoplasm. Its subcellular location is the cytosol. It localises to the membrane. The catalysed reaction is O-phospho-L-seryl-[protein] + H2O = L-seryl-[protein] + phosphate. The enzyme catalyses O-phospho-L-threonyl-[protein] + H2O = L-threonyl-[protein] + phosphate. Functionally, enzyme with a broad specificity. Dephosphorylates PRKAA1 and PRKAA2. Inhibits TBK1-mediated antiviral signaling by dephosphorylating it at 'Ser-172'. Plays an important role in the termination of TNF-alpha-mediated NF-kappa-B activation through dephosphorylating and inactivating IKBKB/IKKB. This chain is Protein phosphatase 1B (PPM1B), found in Bos taurus (Bovine).